Reading from the N-terminus, the 29-residue chain is GRKKGVQFDEGAPDDFDPNNPYKKDVAFL.

The tract at residues 1-29 (GRKKGVQFDEGAPDDFDPNNPYKKDVAFL) is disordered.

This sequence belongs to the complex I NDUFB10 subunit family. In terms of assembly, complex I is composed of about 45 different subunits.

It is found in the mitochondrion inner membrane. Accessory subunit of the mitochondrial membrane respiratory chain NADH dehydrogenase (Complex I), that is believed not to be involved in catalysis. Complex I functions in the transfer of electrons from NADH to the respiratory chain. The immediate electron acceptor for the enzyme is believed to be ubiquinone. This Solanum tuberosum (Potato) protein is NADH dehydrogenase [ubiquinone] 1 beta subcomplex subunit 10.